Here is a 689-residue protein sequence, read N- to C-terminus: ATP-dependent zinc metalloprotease FtsH 2 (689 aa).

Topologically, residues 1–3 (MRK) are cytoplasmic. Residues 4–24 (FFRGASFYILAFIIILFIVQN) traverse the membrane as a helical segment. Residues 25 to 111 (FGRPTQEIDE…SAAPPPTTPW (87 aa)) lie on the Extracellular side of the membrane. A helical transmembrane segment spans residues 112–132 (FIELLPSIFMVLIFIVFWFVF). The Cytoplasmic segment spans residues 133 to 689 (MQQSQGGGNR…QDNEENRKEE (557 aa)). 205 to 212 (GPPGTGKT) provides a ligand contact to ATP. Zn(2+) is bound at residue histidine 427. Glutamate 428 is an active-site residue. Residues histidine 431 and aspartate 503 each contribute to the Zn(2+) site. A compositionally biased stretch (basic and acidic residues) spans 661-673 (EELIEVSSDKEEE). The interval 661-689 (EELIEVSSDKEEEKDNQDDQDNEENRKEE) is disordered.

The protein in the central section; belongs to the AAA ATPase family. This sequence in the C-terminal section; belongs to the peptidase M41 family. As to quaternary structure, homohexamer. Zn(2+) is required as a cofactor.

The protein resides in the cell membrane. In terms of biological role, acts as a processive, ATP-dependent zinc metallopeptidase for both cytoplasmic and membrane proteins. Plays a role in the quality control of integral membrane proteins. The chain is ATP-dependent zinc metalloprotease FtsH 2 from Alkaliphilus metalliredigens (strain QYMF).